A 315-amino-acid chain; its full sequence is Transposase for insertion sequence element IS640 (315 aa).

The region spanning 5–66 (EDFYMIKQMR…PFMDYIDMRL (62 aa)) is the HTH IS21-type domain. Positions 111-285 (FETQPGYQLQ…TPEQRSRWSR (175 aa)) constitute an Integrase catalytic domain.

It belongs to the transposase IS21/IS408/IS1162 family.

Its function is as follows. Involved in the transposition of the insertion sequence. The chain is Transposase for insertion sequence element IS640 (istA) from Shigella sonnei.